We begin with the raw amino-acid sequence, 471 residues long: DnaJ protein P58IPK homolog B (471 aa).

The signal sequence occupies residues 1-24; that stretch reads MARWPWRWRVLLPLLLLHSSPVFA. TPR repeat units lie at residues 32–65, 66–99, 112–146, 148–180, 181–214, 227–260, 265–298, and 300–332; these read PSTL…DPNH, SEAY…KPGS, AQNA…SPNC, KAKL…DEDN, LDAL…DPEH, LLKK…DPDH, VHLY…DGEL, and DALT…SPQD. An N-linked (GlcNAc...) asparagine glycan is attached at asparagine 64. The 67-residue stretch at 353–419 folds into the J domain; sequence DWYKILGISK…DKRVRYDRGE (67 aa).

In terms of assembly, interacts with BIP1.

It localises to the endoplasmic reticulum lumen. Its function is as follows. May play a role in protein folding in the endoplasmic reticulum. In Oryza sativa subsp. japonica (Rice), this protein is DnaJ protein P58IPK homolog B.